Reading from the N-terminus, the 209-residue chain is MEVKLWNDKREREMYENFAELYAIIKATEKLEKAYIRDLISPSEYETECQKLIVHFKTLSASLKDMVPNIERFAETYKMDCSAAVYRLVTSGVPATVEHRAAASASTSSSASVVAECVQNFITSMDSLKLNMVAVDQVYPLLSDLSASLNKLSILPPDFEGKIKMKEWLLRLSKMGASDELTEQQARQLHFDLESSYNSFMAALPNAGN.

A VPS28 N-terminal domain is found at 1–99 (MEVKLWNDKR…TSGVPATVEH (99 aa)). The VPS28 C-terminal domain maps to 109-205 (SSASVVAECV…SYNSFMAALP (97 aa)).

It belongs to the VPS28 family. Component of the endosomal sorting required for transport complex I (ESCRT-I), composed of ELC, VPS28 and VPS37. Interacts with ELC.

The protein localises to the endosome. In terms of biological role, component of the ESCRT-I complex (endosomal sorting complex required for transport I), a regulator of vesicular trafficking process. Required for the sorting of endocytic ubiquitinated cargos into multivesicular bodies (MVBs). Mediates the association to the ESCRT-0 complex. The chain is Vacuolar protein sorting-associated protein 28 homolog 1 (VPS28-1) from Arabidopsis thaliana (Mouse-ear cress).